Here is a 605-residue protein sequence, read N- to C-terminus: Probable potassium transport system protein Kup 2 (605 aa).

Transmembrane regions (helical) follow at residues 17-37 (GLVF…IMTL), 45-65 (VLGI…VEYA), 96-116 (MAFA…DGVI), 139-159 (AQGG…IFQF), 169-189 (FGPI…VSII), 211-231 (GLAG…GEAL), 246-266 (AWYF…AFIL), 286-306 (LYIP…QALI), 338-358 (IYIG…MILF), 367-387 (AYGL…TMIF), 394-414 (WKVP…TANL), and 417-437 (LPHG…IMVI).

This sequence belongs to the HAK/KUP transporter (TC 2.A.72) family.

It is found in the cell inner membrane. It carries out the reaction K(+)(in) + H(+)(in) = K(+)(out) + H(+)(out). Transport of potassium into the cell. Likely operates as a K(+):H(+) symporter. This chain is Probable potassium transport system protein Kup 2, found in Geobacter sulfurreducens (strain ATCC 51573 / DSM 12127 / PCA).